Reading from the N-terminus, the 202-residue chain is ATP-dependent Clp protease proteolytic subunit 3 (202 aa).

Ser-93 serves as the catalytic Nucleophile. Residue His-118 is part of the active site.

The protein belongs to the peptidase S14 family. Fourteen ClpP subunits assemble into 2 heptameric rings which stack back to back to give a disk-like structure with a central cavity, resembling the structure of eukaryotic proteasomes.

The protein localises to the cytoplasm. It carries out the reaction Hydrolysis of proteins to small peptides in the presence of ATP and magnesium. alpha-casein is the usual test substrate. In the absence of ATP, only oligopeptides shorter than five residues are hydrolyzed (such as succinyl-Leu-Tyr-|-NHMec, and Leu-Tyr-Leu-|-Tyr-Trp, in which cleavage of the -Tyr-|-Leu- and -Tyr-|-Trp bonds also occurs).. Its function is as follows. Cleaves peptides in various proteins in a process that requires ATP hydrolysis. Has a chymotrypsin-like activity. Plays a major role in the degradation of misfolded proteins. This is ATP-dependent Clp protease proteolytic subunit 3 from Rhodococcus jostii (strain RHA1).